Reading from the N-terminus, the 204-residue chain is Guanylate kinase (204 aa).

The 180-residue stretch at 5-184 (GLLLVLSGPS…AVNHIKAIVD (180 aa)) folds into the Guanylate kinase-like domain. 12–19 (GPSGVGKG) serves as a coordination point for ATP.

This sequence belongs to the guanylate kinase family.

The protein resides in the cytoplasm. The enzyme catalyses GMP + ATP = GDP + ADP. Essential for recycling GMP and indirectly, cGMP. The sequence is that of Guanylate kinase from Lactobacillus delbrueckii subsp. bulgaricus (strain ATCC 11842 / DSM 20081 / BCRC 10696 / JCM 1002 / NBRC 13953 / NCIMB 11778 / NCTC 12712 / WDCM 00102 / Lb 14).